A 70-amino-acid polypeptide reads, in one-letter code: Exodeoxyribonuclease 7 small subunit (70 aa).

It belongs to the XseB family. As to quaternary structure, heterooligomer composed of large and small subunits.

The protein localises to the cytoplasm. It catalyses the reaction Exonucleolytic cleavage in either 5'- to 3'- or 3'- to 5'-direction to yield nucleoside 5'-phosphates.. Functionally, bidirectionally degrades single-stranded DNA into large acid-insoluble oligonucleotides, which are then degraded further into small acid-soluble oligonucleotides. In Streptococcus pneumoniae serotype 2 (strain D39 / NCTC 7466), this protein is Exodeoxyribonuclease 7 small subunit.